A 384-amino-acid polypeptide reads, in one-letter code: Protein V (384 aa).

2 disordered regions span residues 1-23 (MDQD…GGRE) and 38-317 (SEPT…TKKG). Positions 7–20 (ILKEDSEVEREAPG) are enriched in basic and acidic residues. The segment covering 50–59 (LHNTINTPQG) has biased composition (polar residues). Ser-68 bears the Phosphoserine; by host mark. Basic and acidic residues predominate over residues 83–101 (RSGEESRVSGRTSKPEAEA). A Phosphoserine; by host modification is found at Ser-125. Positions 150–168 (GIEDENREMAAHPDKRGED) are enriched in basic and acidic residues. A compositionally biased stretch (polar residues) spans 191-206 (ASNNGRSMEPGSSHSA). Ser-192, Ser-249, Ser-257, and Ser-260 each carry phosphoserine; by host. Zn(2+) contacts are provided by His-318, Cys-337, Cys-341, Cys-353, Cys-355, Cys-358, Cys-362, and Cys-365.

It belongs to the paramyxoviruses V protein family. As to quaternary structure, interacts with host IFIH1/MDA5 and DHX58/LGP2. Interacts with host IRF3. Interacts with host RIGI regulatory protein (via CARDs domain) and host TRIM25 (via SPRY domain); these interactions prevent TRIM25-mediated ubiquitination of RIG-I and disrupts downstream RIG-I signaling.

Its subcellular location is the host cytoplasm. In terms of biological role, plays an essential role in the inhibition of host immune response. Prevents the establishment of cellular antiviral state by blocking interferon-alpha/beta (IFN-alpha/beta) production and signaling pathway. Interacts with host IFIH1/MDA5 and DHX58/LGP2 to inhibit the transduction pathway involved in the activation of IFN-beta promoter, thus protecting the virus against cell antiviral state. Also interacts with and inhibits host IRF3. Blocks the type I interferon signaling pathway by disrupting the RIG-I signaling pathway. The polypeptide is Protein V (P/V/C) (Sendai virus (strain Fushimi) (SeV)).